The primary structure comprises 163 residues: Putative 4-hydroxy-4-methyl-2-oxoglutarate aldolase (163 aa).

Substrate contacts are provided by residues 76–79 (GDML) and arginine 98. Aspartate 99 provides a ligand contact to a divalent metal cation.

The protein belongs to the class II aldolase/RraA-like family. Homotrimer. The cofactor is a divalent metal cation.

The enzyme catalyses 4-hydroxy-4-methyl-2-oxoglutarate = 2 pyruvate. It catalyses the reaction oxaloacetate + H(+) = pyruvate + CO2. Its function is as follows. Catalyzes the aldol cleavage of 4-hydroxy-4-methyl-2-oxoglutarate (HMG) into 2 molecules of pyruvate. Also contains a secondary oxaloacetate (OAA) decarboxylase activity due to the common pyruvate enolate transition state formed following C-C bond cleavage in the retro-aldol and decarboxylation reactions. This chain is Putative 4-hydroxy-4-methyl-2-oxoglutarate aldolase, found in Pseudomonas putida (strain W619).